The sequence spans 777 residues: Semaphorin-4F (777 aa).

Residues 1–40 form the signal peptide; it reads MLARAERPRPGPRPPPVSLFPPPSSLLLLLLAMLSAPVCG. Residues 41–667 lie on the Extracellular side of the membrane; that stretch reads RVPRSVPRTS…PANRAHTVVG (627 aa). The 469-residue stretch at 48–516 folds into the Sema domain; it reads RTSLPISEAD…SHTEVTQVNT (469 aa). Asn-70 carries N-linked (GlcNAc...) asparagine glycosylation. Cys-118 and Cys-128 form a disulfide bridge. Asn-139 carries an N-linked (GlcNAc...) asparagine glycan. 3 disulfides stabilise this stretch: Cys-146/Cys-155, Cys-279/Cys-390, and Cys-303/Cys-349. Asn-515 is a glycosylation site (N-linked (GlcNAc...) asparagine). Positions 518–569 constitute a PSI domain; the sequence is NCGRLQSCSECILAQDPVCAWSFRLDACVAHAGEHRGMVQDIESADVSSLCP. 3 cysteine pairs are disulfide-bonded: Cys-519–Cys-536, Cys-528–Cys-545, and Cys-593–Cys-634. The Ig-like C2-type domain maps to 586-641; it reads VGHVVLPCSPSSAWASCVWHQPSGVTSLTPRRDGLEVVVTPGAMGAYACECQEGGA. The chain crosses the membrane as a helical span at residues 668–688; sequence AGLVGFFLGVLAASLTLLLIG. Residues 689 to 777 are Cytoplasmic-facing; sequence RRQQRRRQRE…PLATCDETSI (89 aa). The disordered stretch occupies residues 703 to 742; that stretch reads DKVGLDLGAPPSGTTSYSQDPPSPSPEDERLPLALGKRGS. Residues Ser-725 and Ser-727 each carry the phosphoserine modification. Residues 775–777 carry the PDZ-binding motif; sequence TSI.

The protein belongs to the semaphorin family. In terms of assembly, interacts (via PDZ-binding motif) with DLG4/SAP90 (via PDZ domain 2); this interaction may promote translocation of DLG4/SAP90 to the membrane. Expressed throughout the adult brain, where it shows particularly strong expression in the hippocampus, corpus callosum, granular layer and deep nuclei of the cerebellum, and the mitral layer of the olfactory bulb (at protein level). At the cellular level, detected in neuronal precursors, postmitotic neurons, pyramidal neurons, and glial cells including mature oligodendocytes and oligodendroglial precursor cells (at protein level).

The protein localises to the cell membrane. It is found in the postsynaptic density. Its subcellular location is the perikaryon. The protein resides in the cell projection. It localises to the dendrite. Functionally, probable cell surface receptor that regulates oligodendroglial precursor cell migration. Might also regulate differentiation of oligodendroglial precursor cells. Has growth cone collapse activity against retinal ganglion-cell axons. The polypeptide is Semaphorin-4F (Sema4f) (Mus musculus (Mouse)).